The following is a 405-amino-acid chain: Tyrosine--tRNA ligase (405 aa).

The short motif at 41-50 (PTAPDLHLGH) is the 'HIGH' region element. The 'KMSKS' region signature appears at 225–229 (KMSKS). Residue lysine 228 participates in ATP binding. The S4 RNA-binding domain occupies 342–404 (EPLLVWVLSK…GKKGKFLKII (63 aa)).

The protein belongs to the class-I aminoacyl-tRNA synthetase family. TyrS type 2 subfamily. Homodimer.

It localises to the cytoplasm. It carries out the reaction tRNA(Tyr) + L-tyrosine + ATP = L-tyrosyl-tRNA(Tyr) + AMP + diphosphate + H(+). Catalyzes the attachment of tyrosine to tRNA(Tyr) in a two-step reaction: tyrosine is first activated by ATP to form Tyr-AMP and then transferred to the acceptor end of tRNA(Tyr). The protein is Tyrosine--tRNA ligase of Leptospira interrogans serogroup Icterohaemorrhagiae serovar Lai (strain 56601).